The chain runs to 452 residues: Chloride/fluoride channel protein (452 aa).

Helical transmembrane passes span Trp23–Leu43, Trp57–Gly77, Ile97–Gly117, Phe160–Ile180, Leu188–Val208, Leu222–Phe242, Pro264–Ile284, Val315–Gly337, Leu344–Phe364, and Ile386–His408.

The protein belongs to the chloride channel (TC 2.A.49) family.

It is found in the cell membrane. In terms of biological role, transports chloride and fluoride with similar efficiency. The chain is Chloride/fluoride channel protein (eriC) from Pseudomonas syringae pv. tomato (strain ATCC BAA-871 / DC3000).